A 413-amino-acid polypeptide reads, in one-letter code: Putative competence-damage inducible protein (413 aa).

Belongs to the CinA family.

The sequence is that of Putative competence-damage inducible protein from Acetivibrio thermocellus (strain ATCC 27405 / DSM 1237 / JCM 9322 / NBRC 103400 / NCIMB 10682 / NRRL B-4536 / VPI 7372) (Clostridium thermocellum).